The chain runs to 322 residues: ATP-dependent 6-phosphofructokinase (322 aa).

Gly-11 is an ATP binding site. 21-25 contacts ADP; sequence RAVTR. ATP contacts are provided by residues 72 to 73 and 102 to 105; these read RC and GDGS. Asp-103 is a Mg(2+) binding site. 127 to 129 contributes to the substrate binding site; that stretch reads TID. Catalysis depends on Asp-129, which acts as the Proton acceptor. Residue Arg-156 coordinates ADP. Residues Arg-164 and 171–173 contribute to the substrate site; that span reads MGR. ADP contacts are provided by residues 187–189, Arg-213, and 215–217; these read GAE and KKH. Substrate-binding positions include Glu-224, Arg-245, and 251 to 254; that span reads HIQR.

The protein belongs to the phosphofructokinase type A (PFKA) family. ATP-dependent PFK group I subfamily. Prokaryotic clade 'B1' sub-subfamily. As to quaternary structure, homotetramer. The cofactor is Mg(2+).

The protein localises to the cytoplasm. The catalysed reaction is beta-D-fructose 6-phosphate + ATP = beta-D-fructose 1,6-bisphosphate + ADP + H(+). It participates in carbohydrate degradation; glycolysis; D-glyceraldehyde 3-phosphate and glycerone phosphate from D-glucose: step 3/4. Its activity is regulated as follows. Allosterically activated by ADP and other diphosphonucleosides, and allosterically inhibited by phosphoenolpyruvate. Its function is as follows. Catalyzes the phosphorylation of D-fructose 6-phosphate to fructose 1,6-bisphosphate by ATP, the first committing step of glycolysis. This is ATP-dependent 6-phosphofructokinase from Staphylococcus epidermidis (strain ATCC 35984 / DSM 28319 / BCRC 17069 / CCUG 31568 / BM 3577 / RP62A).